Consider the following 89-residue polypeptide: Small ribosomal subunit protein uS15 (89 aa).

The protein belongs to the universal ribosomal protein uS15 family. As to quaternary structure, part of the 30S ribosomal subunit. Forms a bridge to the 50S subunit in the 70S ribosome, contacting the 23S rRNA.

One of the primary rRNA binding proteins, it binds directly to 16S rRNA where it helps nucleate assembly of the platform of the 30S subunit by binding and bridging several RNA helices of the 16S rRNA. In terms of biological role, forms an intersubunit bridge (bridge B4) with the 23S rRNA of the 50S subunit in the ribosome. This chain is Small ribosomal subunit protein uS15, found in Shouchella clausii (strain KSM-K16) (Alkalihalobacillus clausii).